A 238-amino-acid polypeptide reads, in one-letter code: Purine nucleoside phosphorylase DeoD-type (238 aa).

H4 provides a ligand contact to a purine D-ribonucleoside. Phosphate is bound by residues G20, R24, R43, and 87 to 90 (RVGS). A purine D-ribonucleoside contacts are provided by residues 179–181 (EME) and 203–204 (SD). D204 functions as the Proton donor in the catalytic mechanism.

Belongs to the PNP/UDP phosphorylase family. In terms of assembly, homohexamer; trimer of homodimers.

The enzyme catalyses a purine D-ribonucleoside + phosphate = a purine nucleobase + alpha-D-ribose 1-phosphate. It carries out the reaction a purine 2'-deoxy-D-ribonucleoside + phosphate = a purine nucleobase + 2-deoxy-alpha-D-ribose 1-phosphate. In terms of biological role, catalyzes the reversible phosphorolytic breakdown of the N-glycosidic bond in the beta-(deoxy)ribonucleoside molecules, with the formation of the corresponding free purine bases and pentose-1-phosphate. The chain is Purine nucleoside phosphorylase DeoD-type from Haemophilus ducreyi (strain 35000HP / ATCC 700724).